The chain runs to 309 residues: Homoserine O-succinyltransferase (309 aa).

Catalysis depends on Cys142, which acts as the Acyl-thioester intermediate. Lys163 and Ser192 together coordinate substrate. His235 functions as the Proton acceptor in the catalytic mechanism. Residue Glu237 is part of the active site. Substrate is bound at residue Arg249.

Belongs to the MetA family. As to quaternary structure, homodimer.

It is found in the cytoplasm. The catalysed reaction is L-homoserine + succinyl-CoA = O-succinyl-L-homoserine + CoA. It participates in amino-acid biosynthesis; L-methionine biosynthesis via de novo pathway; O-succinyl-L-homoserine from L-homoserine: step 1/1. Transfers a succinyl group from succinyl-CoA to L-homoserine, forming succinyl-L-homoserine. The sequence is that of Homoserine O-succinyltransferase from Escherichia coli O157:H7.